The following is a 294-amino-acid chain: MTVEGFFDPATCTISYLLFDSGSGECALIDSVLDYDPKSGRTRTASADQLIARVAALGARVRWLLETHVHADHLSAAPYLKTRVGGEIAIGRHVTRVQDVFGKLFNAGPAFAHDGSQFDRLLDDGDTLALGALSIRAMHTPGHTPACMTYVVTEAHAAHDARDAAAFVGDTLFMPDYGTARCDFPGGDARSLYRSIRKVLSLPPATRLYMCHDYQPNGRAIQYASTVADELRENVHIREGVTEDDFVAMRTARDATLDMPVLMLPSVQVNMRAGRLPEPEDNGVRYLKIPLDAI.

A divalent metal cation-binding residues include histidine 68, histidine 70, aspartate 72, histidine 73, histidine 143, aspartate 170, and histidine 212.

The protein belongs to the metallo-beta-lactamase superfamily. The cofactor is a divalent metal cation.

Its function is as follows. Probable hydrolase. Does not have beta-lactamase activity. The chain is Probable metallo-hydrolase BURPS1710b_2304 from Burkholderia pseudomallei (strain 1710b).